The following is a 512-amino-acid chain: FAD-linked oxidoreductase iacH (512 aa).

Residues 1-22 (MVSLKACVVAYGFTLLPALVSG) form the signal peptide. Residues Asn39, Asn55, Asn69, Asn210, Asn217, Asn278, Asn295, and Asn367 are each glycosylated (N-linked (GlcNAc...) asparagine). Positions 77-248 (LDTPDVQLVV…TSLEKKIYPG (172 aa)) constitute an FAD-binding PCMH-type domain.

It belongs to the oxygen-dependent FAD-linked oxidoreductase family. Requires FAD as cofactor.

Its pathway is secondary metabolite biosynthesis. Its function is as follows. FAD-linked oxidoreductase; part of the gene cluster that mediates the biosynthesis of iso-A82775C, a enylepoxycyclohexane and biosynthetic precursor of the chloropestolide anticancer natural products. Within the cluster, the prenyltransferase iacE prenylates siccayne to generate pestalodiol E, using dimethylallyl diphosphate (DMAPP) as cosubstrate. The probable oxidoreductase iacF is then involved in the epoxidation of pestalodiol F to pestalodiol F, which is further converted to pestalofone A by the short-chain dehydrogenase/reductase iacG. Iso-A82775C is subsequently generated from pestalofone A by the short-chain dehydrogenase/reductase iacC. Iso-A82775C is further condensed with maldoxin via a Diels-Alder reaction to produce the anticancer natural products chloropestolides A to E. The protein is FAD-linked oxidoreductase iacH of Pestalotiopsis fici (strain W106-1 / CGMCC3.15140).